A 200-amino-acid polypeptide reads, in one-letter code: Large ribosomal subunit protein uL4 (200 aa).

Positions 38-68 are disordered; it reads GRQGSKQQKTRSDVRGGGKRPWRQKGTGRAR. Residues 54 to 65 are compositionally biased toward basic residues; that stretch reads GGKRPWRQKGTG.

Belongs to the universal ribosomal protein uL4 family. In terms of assembly, part of the 50S ribosomal subunit.

Its function is as follows. One of the primary rRNA binding proteins, this protein initially binds near the 5'-end of the 23S rRNA. It is important during the early stages of 50S assembly. It makes multiple contacts with different domains of the 23S rRNA in the assembled 50S subunit and ribosome. Functionally, forms part of the polypeptide exit tunnel. This chain is Large ribosomal subunit protein uL4, found in Pseudomonas fluorescens (strain SBW25).